Reading from the N-terminus, the 611-residue chain is DNA mismatch repair protein MutL (611 aa).

This sequence belongs to the DNA mismatch repair MutL/HexB family.

Its function is as follows. This protein is involved in the repair of mismatches in DNA. It is required for dam-dependent methyl-directed DNA mismatch repair. May act as a 'molecular matchmaker', a protein that promotes the formation of a stable complex between two or more DNA-binding proteins in an ATP-dependent manner without itself being part of a final effector complex. This Borreliella afzelii (strain PKo) (Borrelia afzelii) protein is DNA mismatch repair protein MutL.